A 191-amino-acid polypeptide reads, in one-letter code: Large ribosomal subunit protein bL9 (191 aa).

The segment at glutamate 149 to glutamate 191 is disordered. Acidic residues predominate over residues phenylalanine 179–glutamate 191.

It belongs to the bacterial ribosomal protein bL9 family.

Binds to the 23S rRNA. The sequence is that of Large ribosomal subunit protein bL9 (rplI) from Agrobacterium fabrum (strain C58 / ATCC 33970) (Agrobacterium tumefaciens (strain C58)).